The sequence spans 240 residues: Homeobox protein notochord (240 aa).

The span at 1–13 shows a compositional bias: polar residues; the sequence is MSSPAPSGTQVQP. 2 disordered regions span residues 1–21 and 208–240; these read MSSP…PCPG and QKLK…GIGS. Residues 149-208 constitute a DNA-binding region (homeobox); it reads TKRVRTTFNLQQLQELEKVFAKQHNLVGKERAQLAARLHLTENQVRIWFQNRRVKYQKQQ. Residues 213–225 show a composition bias toward low complexity; the sequence is PSSSVMEEPSSSS.

The protein localises to the nucleus. Transcription factor that controls node morphogenesis. Acts downstream of both FOXA2 and Brachyury (T) during notochord development. Is essential for cilia formation in the posterior notochord (PNC) and for left-right patterning; acts upstream of FOXJ1 and RFX3 in this process and is required for the expression of various components important for axonemal assembly and function. Plays a role in regulating axial versus paraxial cell fate. Activates the transcription of ciliary proteins C11orf97 homolog, FAM183B and SPACA9 in the embryonic ventral node. In Mus musculus (Mouse), this protein is Homeobox protein notochord (Noto).